We begin with the raw amino-acid sequence, 154 residues long: Small ribosomal subunit protein uS15 (154 aa).

A disordered region spans residues Met-1 to Trp-23.

The protein belongs to the universal ribosomal protein uS15 family. In terms of assembly, part of the 30S ribosomal subunit.

The sequence is that of Small ribosomal subunit protein uS15 from Staphylothermus marinus (strain ATCC 43588 / DSM 3639 / JCM 9404 / F1).